The primary structure comprises 429 residues: Histidinol dehydrogenase (429 aa).

Residues Y130, Q191, and N214 each coordinate NAD(+). Residues S237, Q259, and H262 each coordinate substrate. Zn(2+) contacts are provided by Q259 and H262. Catalysis depends on proton acceptor residues E327 and H328. Residues H328, D361, E415, and H420 each contribute to the substrate site. Residue D361 participates in Zn(2+) binding. H420 contributes to the Zn(2+) binding site.

It belongs to the histidinol dehydrogenase family. Zn(2+) is required as a cofactor.

It catalyses the reaction L-histidinol + 2 NAD(+) + H2O = L-histidine + 2 NADH + 3 H(+). It functions in the pathway amino-acid biosynthesis; L-histidine biosynthesis; L-histidine from 5-phospho-alpha-D-ribose 1-diphosphate: step 9/9. Its function is as follows. Catalyzes the sequential NAD-dependent oxidations of L-histidinol to L-histidinaldehyde and then to L-histidine. This is Histidinol dehydrogenase from Geobacter sulfurreducens (strain ATCC 51573 / DSM 12127 / PCA).